We begin with the raw amino-acid sequence, 473 residues long: Cell division protein FtsZ homolog 2-2, chloroplastic (473 aa).

GTP contacts are provided by residues 124 to 128, 213 to 215, Glu244, and Arg248; these read GGGSN and GTG. Thr282 is subject to Phosphothreonine; by PGK1. Asp292 serves as a coordination point for GTP. Residues 424 to 455 form a disordered region; sequence EEGEGRPLQATQADASMGATRRPSSSFTEGSS. Positions 445–454 are enriched in polar residues; sequence RPSSSFTEGS.

This sequence belongs to the FtsZ family. In terms of assembly, aggregates to form a contractile ring-like structure; contraction of the ring was accompanied by an increase in the filament turnover rate. Self-interacts and binds to FTSZ1 in heteropolymers to form two morphologically distinct types of filaments, termed type-I (smooth filaments) and -II (rough filaments), in a GTP-dependent manner. Part of a complex made of ARC3, ARC6, FTSZ1 and FTSZ2. Interacts (via C-terminus) with ARC6. Interacts with CDP1/PARC6. Binds to PGK1. In terms of processing, phosphorylation at Thr-282 is required for the formation of contractile ring at the chloroplast midpoint.

It is found in the plastid. The protein localises to the chloroplast stroma. Its subcellular location is the chloroplast thylakoid membrane. Its function is as follows. Exhibits GTPase activity. Component of the plastid division machinery that forms a contractile ring at the division site. Contributes to plastid division in the vegetative shoot apex, at the shoot apical meristem (SAM) where the proplastid-to-chloroplast transition takes place. The polypeptide is Cell division protein FtsZ homolog 2-2, chloroplastic (Arabidopsis thaliana (Mouse-ear cress)).